The sequence spans 485 residues: NADH-quinone oxidoreductase subunit N (485 aa).

14 helical membrane passes run 8–28, 35–55, 71–91, 105–125, 127–147, 159–179, 203–223, 235–255, 271–291, 297–317, 326–346, 373–393, 408–430, and 455–475; these read LIAL…MLSI, FLNA…LWFV, GFAM…CTFA, FYLL…ANHL, SLFL…GYAF, YTIL…LVYA, LLAG…LVPF, PAPV…GVVM, VVLA…ALSQ, LLGY…IALQ, VGVY…VVSL, AAVM…LGFI, WWLV…RVAV, and IVVL…QPLI.

This sequence belongs to the complex I subunit 2 family. In terms of assembly, NDH-1 is composed of 13 different subunits. Subunits NuoA, H, J, K, L, M, N constitute the membrane sector of the complex.

Its subcellular location is the cell inner membrane. It carries out the reaction a quinone + NADH + 5 H(+)(in) = a quinol + NAD(+) + 4 H(+)(out). Its function is as follows. NDH-1 shuttles electrons from NADH, via FMN and iron-sulfur (Fe-S) centers, to quinones in the respiratory chain. The immediate electron acceptor for the enzyme in this species is believed to be ubiquinone. Couples the redox reaction to proton translocation (for every two electrons transferred, four hydrogen ions are translocated across the cytoplasmic membrane), and thus conserves the redox energy in a proton gradient. This is NADH-quinone oxidoreductase subunit N from Escherichia coli O139:H28 (strain E24377A / ETEC).